The primary structure comprises 232 residues: LexA repressor (232 aa).

Positions 35–55 (IREIGDAAGLQSTSSVAYQLK) form a DNA-binding region, H-T-H motif. Over residues 61–85 (GFLRRDPNKPRAVDVRHLPETESRS) the composition is skewed to basic and acidic residues. The tract at residues 61–104 (GFLRRDPNKPRAVDVRHLPETESRSSKAATQAKSKAPQAGVHDP) is disordered. Residues 86-99 (SKAATQAKSKAPQA) show a composition bias toward low complexity. Active-site for autocatalytic cleavage activity residues include S156 and K193.

The protein belongs to the peptidase S24 family. In terms of assembly, homodimer.

The catalysed reaction is Hydrolysis of Ala-|-Gly bond in repressor LexA.. Functionally, represses a number of genes involved in the response to DNA damage (SOS response), including recA and lexA. In the presence of single-stranded DNA, RecA interacts with LexA causing an autocatalytic cleavage which disrupts the DNA-binding part of LexA, leading to derepression of the SOS regulon and eventually DNA repair. This is LexA repressor from Corynebacterium glutamicum (strain ATCC 13032 / DSM 20300 / JCM 1318 / BCRC 11384 / CCUG 27702 / LMG 3730 / NBRC 12168 / NCIMB 10025 / NRRL B-2784 / 534).